A 225-amino-acid polypeptide reads, in one-letter code: Prepilin leader peptidase/N-methyltransferase (225 aa).

Residues 1–2 lie on the Periplasmic side of the membrane; the sequence is MT. A helical transmembrane segment spans residues 3–23; it reads MLLPLFILVGFIADYFVNAIA. Topologically, residues 24 to 67 are cytoplasmic; the sequence is YHLSPLEDKTALTFRQVLVHFRQKKYAWHDTVPLILCVAAAIAC. The helical transmembrane segment at 68 to 88 threads the bilayer; that stretch reads ALAPFTPIVTGALFLYFCFVL. Residues 89–103 are Periplasmic-facing; sequence TLSVIDFRTQLLPDK. A helical membrane pass occupies residues 104–124; it reads LTLPLLWLGLVFNAQYGLIDL. Residues 125–127 are Cytoplasmic-facing; that stretch reads HDA. Residues 128 to 148 form a helical membrane-spanning segment; sequence VYGAVAGYGVLWCVYWGVWLV. Over 149–174 the chain is Periplasmic; it reads CHKEGLGYGDFKLLAAAGAWCGWQTL. Residues 175–195 form a helical membrane-spanning segment; the sequence is PMILLIASLGGIGYAIVSQLL. Residues 196 to 202 are Cytoplasmic-facing; that stretch reads QRRTITT. The chain crosses the membrane as a helical span at residues 203–223; that stretch reads IAFGPWLALGSMINLGYLAWI. Over 224–225 the chain is Periplasmic; sequence SY.

It belongs to the peptidase A24 family.

It localises to the cell inner membrane. It catalyses the reaction Typically cleaves a -Gly-|-Phe- bond to release an N-terminal, basic peptide of 5-8 residues from type IV prepilin, and then N-methylates the new N-terminal amino group, the methyl donor being S-adenosyl-L-methionine.. In terms of biological role, plays a role in type II pseudopili formation by proteolytically removing the leader sequence from substrate proteins and subsequently monomethylating the alpha-amino group of the newly exposed N-terminal phenylalanine. Substrates include proteins required for biogenesis of the type II general secretory apparatus. The sequence is that of Prepilin leader peptidase/N-methyltransferase (gspO) from Escherichia coli (strain K12).